The sequence spans 773 residues: FT-interacting protein 3 (773 aa).

Residues 1-16 (MQRPPPEDFSLKETRP) are compositionally biased toward basic and acidic residues. The disordered stretch occupies residues 1–24 (MQRPPPEDFSLKETRPHLGGGKLS). C2 domains lie at 22-142 (KLSG…PQWY), 181-305 (VSGT…SRWY), and 345-471 (YSSD…THSY). Asp55, Asp61, Asp108, Asp110, and Asp115 together coordinate Ca(2+). 3 consecutive transmembrane segments (helical) span residues 574–594 (IMGV…ICNW), 608–628 (IILV…LFLI), and 716–736 (LFVL…FQVV).

The protein belongs to the MCTP family. In terms of assembly, interacts with and regulates subcellular localization and trafficking of STM. It depends on Ca(2+) as a cofactor. In terms of tissue distribution, accumulates in vascular tissues, leaf primordia and flowers. Highly expressed in roots meristems and in both vegetative and inflorescence shoot apical meristems (SAMs).

It is found in the endoplasmic reticulum membrane. It localises to the cytoplasm. Its subcellular location is the vesicle. The protein localises to the cell membrane. The protein resides in the endosome membrane. It is found in the golgi apparatus membrane. Its function is as follows. Required for proliferation and differentiation of shoot stem cells in the shoot apical meristem (SAM), thus determining the appropriate balance between the maintenance of shoot stem cells and their differentiation into other aboveground plant parts via the control of subcellular localization and intercellular trafficking of STM in the shoot apex. Prevents intracellular trafficking of STM to the plasma membrane in cells in the peripheral shoot meristem region thus facilitating STM recycling to the nucleus to maintain stem cells. May function as a signaling molecule by regulating the trafficking of other regulators. The protein is FT-interacting protein 3 of Arabidopsis thaliana (Mouse-ear cress).